Here is a 925-residue protein sequence, read N- to C-terminus: Ectonucleotide pyrophosphatase/phosphodiesterase family member 1 (925 aa).

Residues 1-17 (MERDGCAGGGSRGGEGG) show a composition bias toward gly residues. Residues 1–43 (MERDGCAGGGSRGGEGGRAPREGPAGNGRDRGRSHAAEAPGDP) form a disordered region. At 1-76 (MERDGCAGGG…RTAKDPNTYK (76 aa)) the chain is on the cytoplasmic side. The Di-leucine motif signature appears at 45–52 (AAASLLAP). A helical; Signal-anchor for type II membrane protein membrane pass occupies residues 77–97 (VLSLVLSVCVLTTILGCIFGL). At 98–925 (KPSCAKEVKS…THLPTFSQED (828 aa)) the chain is on the extracellular side. SMB domains lie at 104-144 (EVKS…IEPE) and 145-189 (HIWT…GEKS). Intrachain disulfides connect Cys108-Cys122, Cys112-Cys140, Cys120-Cys133, Cys126-Cys132, Cys149-Cys166, Cys154-Cys184, Cys164-Cys177, Cys170-Cys176, Cys195-Cys241, and Cys203-Cys415. N-linked (GlcNAc...) asparagine glycosylation is present at Asn179. Residues 191 to 591 (VEEPCESINE…APNNGTHGSL (401 aa)) form a phosphodiesterase region. Asp218, Thr256, and Asn277 together coordinate AMP. Asp218 and Thr256 together coordinate Zn(2+). Thr256 acts as the AMP-threonine intermediate in catalysis. Residues Thr256 and Asn277 each contribute to the CMP site. The dTMP site is built by Thr256 and Asn277. The GMP site is built by Thr256 and Asn277. Thr256 carries the post-translational modification Phosphothreonine. Asn285 carries N-linked (GlcNAc...) asparagine glycosylation. The GMP site is built by Leu290, Lys295, and Tyr340. AMP-binding residues include Lys295 and Tyr340. Positions 295 and 340 each coordinate CMP. Tyr340 is a binding site for dTMP. N-linked (GlcNAc...) asparagine glycosylation occurs at Asn341. Position 376 (Asp376) interacts with AMP. 4 residues coordinate Zn(2+): Asp376, His380, Asp423, and His424. Residue Asp376 coordinates CMP. Residue Asp376 coordinates dTMP. Asp376 contributes to the GMP binding site. A 2',3'-cGAMP-binding site is contributed by His380. His424 provides a ligand contact to AMP. His424 lines the CMP pocket. Residue His424 participates in dTMP binding. His424 contacts GMP. 6 disulfide bridges follow: Cys431–Cys530, Cys480–Cys868, Cys614–Cys672, Cys626–Cys726, Cys628–Cys711, and Cys838–Cys848. N-linked (GlcNAc...) asparagine glycosylation occurs at Asn477. Ser532 provides a ligand contact to 2',3'-cGAMP. His535 is an AMP binding site. Zn(2+) is bound at residue His535. A CMP-binding site is contributed by His535. His535 is a dTMP binding site. His535 serves as a coordination point for GMP. 5 N-linked (GlcNAc...) asparagine glycosylation sites follow: Asn585, Asn643, Asn700, Asn731, and Asn748. The interval 597–647 (NPVYTPKHPKEVHPLVQCPFTRNPRDNLGCSCNPSILPIEDFQTQFNLTVA) is linker. Residues 654 to 925 (HETLPYGRPR…THLPTFSQED (272 aa)) form a nuclease-like domain region. 5 residues coordinate Ca(2+): Asp800, Asp802, Asp804, Arg806, and Asp808.

The protein belongs to the nucleotide pyrophosphatase/phosphodiesterase family. As to quaternary structure, homodimer. Interacts with INSR; leading to inhibit INSR autophosphorylation and subsequent activation of INSR kinase activity. In terms of assembly, monomeric. Requires Zn(2+) as cofactor. Post-translationally, autophosphorylated as part of the catalytic cycle of phosphodiesterase/pyrophosphatase activity. In terms of processing, N-glycosylated. The secreted form is produced through cleavage at Lys-103 by intracellular processing. Expressed in plasma cells and also in a number of non-lymphoid tissues, including the distal convoluted tubule of the kidney, chondrocytes and epididymis. Expressed in melanocytes but not in keratinocytes.

It is found in the cell membrane. Its subcellular location is the basolateral cell membrane. The protein localises to the secreted. It catalyses the reaction Hydrolytically removes 5'-nucleotides successively from the 3'-hydroxy termini of 3'-hydroxy-terminated oligonucleotides.. The enzyme catalyses a ribonucleoside 5'-triphosphate + H2O = a ribonucleoside 5'-phosphate + diphosphate + H(+). It carries out the reaction ATP + H2O = AMP + diphosphate + H(+). The catalysed reaction is UTP + H2O = UMP + diphosphate + H(+). It catalyses the reaction GTP + H2O = GMP + diphosphate + H(+). The enzyme catalyses CTP + H2O = CMP + diphosphate + H(+). It carries out the reaction 2',3'-cGAMP + 2 H2O = GMP + AMP + 2 H(+). The catalysed reaction is P(1),P(4)-bis(5'-adenosyl) tetraphosphate + H2O = AMP + ATP + 2 H(+). It catalyses the reaction 3',5'-cyclic AMP + H2O = AMP + H(+). With respect to regulation, at low concentrations of ATP, a phosphorylated intermediate is formed which inhibits further hydrolysis. Nucleotide pyrophosphatase that generates diphosphate (PPi) and functions in bone mineralization and soft tissue calcification by regulating pyrophosphate levels. PPi inhibits bone mineralization and soft tissue calcification by binding to nascent hydroxyapatite crystals, thereby preventing further growth of these crystals. Preferentially hydrolyzes ATP, but can also hydrolyze other nucleoside 5' triphosphates such as GTP, CTP and UTP to their corresponding monophosphates with release of pyrophosphate, as well as diadenosine polyphosphates, and also 3',5'-cAMP to AMP. May also be involved in the regulation of the availability of nucleotide sugars in the endoplasmic reticulum and Golgi, and the regulation of purinergic signaling. Inhibits ectopic joint calcification and maintains articular chondrocytes by repressing hedgehog signaling; it is however unclear whether hedgehog inhibition is direct or indirect. Appears to modulate insulin sensitivity and function. Also involved in melanogenesis. Also able to hydrolyze 2',3'-cGAMP (cyclic GMP-AMP), a second messenger that activates TMEM173/STING and triggers type-I interferon production. 2',3'-cGAMP degradation takes place in the lumen or extracellular space, and not in the cytosol where it is produced; the role of 2',3'-cGAMP hydrolysis is therefore unclear. Not able to hydrolyze the 2',3'-cGAMP linkage isomer 3'-3'-cGAMP. This is Ectonucleotide pyrophosphatase/phosphodiesterase family member 1 from Homo sapiens (Human).